We begin with the raw amino-acid sequence, 129 residues long: Fluoride-specific ion channel FluC 2 (129 aa).

A run of 4 helical transmembrane segments spans residues 3-23, 32-52, 59-79, and 90-110; these read FLYV…MNLW, ATLA…QFLA, LVIL…FSAF, and GAWL…LIMV. Na(+) is bound by residues G71 and T74.

The protein belongs to the fluoride channel Fluc/FEX (TC 1.A.43) family.

It localises to the cell membrane. The catalysed reaction is fluoride(in) = fluoride(out). Its activity is regulated as follows. Na(+) is not transported, but it plays an essential structural role and its presence is essential for fluoride channel function. Fluoride-specific ion channel. Important for reducing fluoride concentration in the cell, thus reducing its toxicity. The protein is Fluoride-specific ion channel FluC 2 of Listeria monocytogenes serotype 4b (strain F2365).